We begin with the raw amino-acid sequence, 483 residues long: Elastin-binding protein EbpS (483 aa).

Basic and acidic residues predominate over residues 1 to 40 (MSNNFKDDFEKNRQSIDTNSHQDHTEEVEKDQSELEHQDT). The tract at residues 1 to 311 (MSNNFKDDFE…HHDRDKERKK (311 aa)) is disordered. The tract at residues 14 to 34 (QSIDTNSHQDHTEEVEKDQSE) is elastin-binding. Positions 64 to 85 (TNHNKQVHNESQTSEDNVQNEA) are enriched in polar residues. 3 stretches are compositionally biased toward basic and acidic residues: residues 103–118 (EPSHQDSTPQHEEEYY), 126–160 (DKSHPEPIEDNDKHETVKDAENNTEHSTVSDKSEA), and 180–199 (SKDKHDDVTVKQYKDESKDH). A compositionally biased stretch (low complexity) spans 204–222 (KGAAIGAGTAGVAGAMAAS). The segment covering 230–243 (DAQNKSNSGKANNS) has biased composition (polar residues). Residues 244–256 (TEDKASQDKSKEH) show a composition bias toward basic and acidic residues. Positions 275 to 294 (GAASKSASAASKPHASNNAS) are enriched in low complexity. Residues 296–311 (NHDEHDHHDRDKERKK) show a composition bias toward basic and acidic residues. A helical transmembrane segment spans residues 317–337 (VLLPLIAAVLIIGALAIFGGM). Residues 348 to 437 (ENKIANTNKN…QRQGGGQRHT (90 aa)) form a disordered region. The segment covering 358 to 395 (NADESKDKDTSKDASKDKSKSTDSDKSKEDQDKATKDE) has biased composition (basic and acidic residues). Residues 400-428 (QNNANQANNQAQNNQNQQQANQNQQQQQQ) are compositionally biased toward low complexity. The LysM domain maps to 434-482 (QRHTVNGQENLYRIAIQYYGSGSPENVEKIRRANGLSGNNIRNGQQIVI).

It localises to the cell membrane. Functionally, promotes binding of soluble elastin peptides and tropoelastin to S.aureus cells although it is not able to promote bacterial adherence to immobilized elastin and, therefore, is not a microbial surface component recognizing adhesive matrix molecule (MSCRAMM). The chain is Elastin-binding protein EbpS (ebpS) from Staphylococcus aureus (strain bovine RF122 / ET3-1).